Reading from the N-terminus, the 1583-residue chain is MAAASAGQQQQQHQHQHKLNIAGSAETVVSGMQHQQQHQQQHQQINMFKQQQQMLPLQQQHHQFFQQQQTKFVSRVVTSAAVHQQQQQHHHQQQQQQQHQQQQQILPAGLVNGNGSGNMMQVANLHLQQQQQQRNSQQHIFVCPTSNQQLLLQQQQQQQQQQQQQQTKQRQAQIKLPIKSAATTGVTAATVAAATAATGATHCMSTTIAARQMSQNNQLYAKNVAKANNASSNGNINRKTATSYNGNLAPGWRRLTNNNEVAYISPSGKTLRTQFQIKDYLLTQGTCKCGLPCPLRPEYLFDFNAQVPNQPLKLPTEASTATPTPCRHQRRFLESQQLQLPQQQQQQQHLQHQQQQQQAVKDVSVDVAVSVSGPAAVSDVFSTLMTSTARTATMVTPTAATSPAQAATTTTHEMANKDADCHKYGNNKLPATNRTATTPTPAPTPPPQHPNGMPTSQALALGGVPVGVHPKRPTGGHVIKQPASVLGPPCTPPLAVGGANTVIQQQQPLQQHPNFKDDPAGYLQQQTALLHNSLGVGLDATKTAAGTSTARALPQEPIVHSSQQQQQQQQQQLQQQQQLQRQKIRRLSLFGKWETDPAPATNSQPTNGTRALQVDAAAFARPQKPQVTCVTLVPPPQESPVSSSAAETLEKRPEQVGAISTSHESPRQSLSSPTDSVDSAKSTPSASPKPQTQVPMQPQLLQMRPHLQANLSAQTPVTVPAHVRVMRQQQAQIIPGQRLPVASSSAAMATMTRSIVTSTAGTSTITGRPVATTLNNSNPTVAQLQSMANAMNGAGGGGQLIMTSSGQLLVIPTPSKQTTQHHRPGQPGQGVIIQQQQPAELHPQPGGGYIVSQPSPVAAASSSSSSSTVILNSGGAKLLHHQIITSQAGQINQATSGGSGNQPQTVLLNTLPNGGYIVQQQPQTQSPQQAEQILAMPQPPPAQTLIISSPDTKRRARKRKSSVCHTPPPSGSPAKIISPQISPSIPNQAPALLHQQAAAAAAAAPQFQQQFQLSPGIQGIVVNKPNPPQQPQTQQLLLQNGQILQQVNLIGQQLLMPAGLVMGPDATLLQIQNMPATSLMTPQGPVMLRTPSPQNKPSFISPSAGGQQYLVGANGQLSPIGQIYSTPMGLVMPTGQQGGASFVQASPTTTTIQIQQQPAPQPTQISLQPAQATYMTETVMSRQGTAASPPDTTTCSPRSPERPSSHRSSGSDMVQCVSSSEPDAAVSPQSTESRQSPSSTDCERSICKNNVFTQPSGIYKHSEPKIRRIHITSQTSAENGISLMQGQESPTTTQLLSSVPTAQPTVEKTTVRTPTKRSRRPQRGAARAAPSASDKSFPLPPRSFAIGELIWGPARGHPAWPGKIVKMPDGVCTPSQQFDHVWVQWFGGGGRSTSELIPVNSLQSLSEGLEAHHKAQKDTRKSRKLNSQLERAIQEAMTELDNISASSTPAATSSSSATISAVPASAGPAVIGGQQQYQQQQQQQQQQQSPSSTNNKINGLARSKRQANTSGASMVLTTSTAATLSGLFNQQRAKPIRIAPAPPVATTGTGNIGTIAAAGAAAASTGTGTATTSARSEILKLAK.

Residues 81-115 (AVHQQQQQHHHQQQQQQQHQQQQQILPAGLVNGNG) form a disordered region. The segment covering 83 to 104 (HQQQQQHHHQQQQQQQHQQQQQ) has biased composition (low complexity). The region spanning 238–308 (RKTATSYNGN…YLFDFNAQVP (71 aa)) is the MBD domain. Disordered regions lie at residues 427 to 457 (NKLP…PTSQ), 556 to 579 (EPIV…QQQL), 630 to 694 (VTLV…QTQV), 839 to 862 (AELH…AASS), 940 to 980 (PPAQ…ISPQ), 1179 to 1247 (VMSR…RSIC), and 1287 to 1339 (QESP…SFPL). Residues 430 to 439 (PATNRTATTP) are compositionally biased toward low complexity. Positions 440–449 (TPAPTPPPQH) are enriched in pro residues. Residues 563 to 579 (QQQQQQQQQQLQQQQQL) are compositionally biased toward low complexity. A compositionally biased stretch (polar residues) spans 658–677 (AISTSHESPRQSLSSPTDSV). Composition is skewed to low complexity over residues 679–693 (SAKS…PQTQ) and 851–862 (VSQPSPVAAASS). Polar residues-rich tracts occupy residues 1179–1195 (VMSR…TTTC), 1216–1240 (CVSS…PSST), and 1287–1313 (QESP…TVRT). Low complexity predominate over residues 1323–1333 (RGAARAAPSAS). Residues 1346–1408 (IGELIWGPAR…VNSLQSLSEG (63 aa)) form the PWWP domain. A coiled-coil region spans residues 1415–1446 (AQKDTRKSRKLNSQLERAIQEAMTELDNISAS). The interval 1471 to 1497 (IGGQQQYQQQQQQQQQQQSPSSTNNKI) is disordered. Residues 1474–1488 (QQQYQQQQQQQQQQQ) are compositionally biased toward low complexity.

As to quaternary structure, component of the polycomb repressive deubiquitinase (PR-DUB) complex, at least composed of caly/calypso, Asx and sba (MDB5/6 homolog). Interacts (via MBD domain) with Asx (via PHD domain); the interaction is important for the stability of the PR-DUB complex.

Non-catalytic component of the polycomb repressive deubiquitinase (PR-DUB) complex, a complex that specifically mediates deubiquitination of histone H2A monoubiquitinated at 'Lys-119' (H2AK118ub1). Important for maintaining stability of the PR-DUB complex. Probable epigenetic regulator involved in developmental pattern formation and eye development. This Drosophila melanogaster (Fruit fly) protein is Methyl-CpG-binding domain protein 5/6 homolog sba.